We begin with the raw amino-acid sequence, 347 residues long: Anthranilate phosphoribosyltransferase (347 aa).

5-phospho-alpha-D-ribose 1-diphosphate contacts are provided by residues Gly-88, Gly-91–Asp-92, Thr-96, Asn-98–Thr-101, Lys-116–Ser-124, and Ser-128. Gly-88 lines the anthranilate pocket. Ser-100 is a Mg(2+) binding site. Asn-119 contributes to the anthranilate binding site. Residue Arg-174 participates in anthranilate binding. Mg(2+) contacts are provided by Asp-233 and Glu-234.

Belongs to the anthranilate phosphoribosyltransferase family. Homodimer. Mg(2+) is required as a cofactor.

It catalyses the reaction N-(5-phospho-beta-D-ribosyl)anthranilate + diphosphate = 5-phospho-alpha-D-ribose 1-diphosphate + anthranilate. The protein operates within amino-acid biosynthesis; L-tryptophan biosynthesis; L-tryptophan from chorismate: step 2/5. In terms of biological role, catalyzes the transfer of the phosphoribosyl group of 5-phosphorylribose-1-pyrophosphate (PRPP) to anthranilate to yield N-(5'-phosphoribosyl)-anthranilate (PRA). The sequence is that of Anthranilate phosphoribosyltransferase from Rhodospirillum rubrum (strain ATCC 11170 / ATH 1.1.1 / DSM 467 / LMG 4362 / NCIMB 8255 / S1).